The primary structure comprises 512 residues: Ribose import ATP-binding protein RbsA 1 (512 aa).

ABC transporter domains lie at 8–244 (FRME…IGRE) and 257–502 (PEEK…LNIG). 40–47 (GENGAGKS) serves as a coordination point for ATP.

The protein belongs to the ABC transporter superfamily. Ribose importer (TC 3.A.1.2.1) family. As to quaternary structure, the complex is composed of an ATP-binding protein (RbsA), two transmembrane proteins (RbsC) and a solute-binding protein (RbsB).

It localises to the cell inner membrane. The catalysed reaction is D-ribose(out) + ATP + H2O = D-ribose(in) + ADP + phosphate + H(+). In terms of biological role, part of the ABC transporter complex RbsABC involved in ribose import. Responsible for energy coupling to the transport system. The sequence is that of Ribose import ATP-binding protein RbsA 1 from Rhizobium etli (strain ATCC 51251 / DSM 11541 / JCM 21823 / NBRC 15573 / CFN 42).